We begin with the raw amino-acid sequence, 386 residues long: S-adenosylmethionine:tRNA ribosyltransferase-isomerase (386 aa).

It belongs to the QueA family. In terms of assembly, monomer.

Its subcellular location is the cytoplasm. The enzyme catalyses 7-aminomethyl-7-carbaguanosine(34) in tRNA + S-adenosyl-L-methionine = epoxyqueuosine(34) in tRNA + adenine + L-methionine + 2 H(+). It functions in the pathway tRNA modification; tRNA-queuosine biosynthesis. Transfers and isomerizes the ribose moiety from AdoMet to the 7-aminomethyl group of 7-deazaguanine (preQ1-tRNA) to give epoxyqueuosine (oQ-tRNA). This is S-adenosylmethionine:tRNA ribosyltransferase-isomerase from Rickettsia canadensis (strain McKiel).